We begin with the raw amino-acid sequence, 75 residues long: Putative sulfur carrier protein YrkI (75 aa).

The Cysteine persulfide intermediate role is filled by Cys-14.

Belongs to the sulfur carrier protein TusA family.

This chain is Putative sulfur carrier protein YrkI (yrkI), found in Bacillus subtilis (strain 168).